We begin with the raw amino-acid sequence, 425 residues long: Serine--tRNA ligase (425 aa).

Threonine 230–glutamate 232 lines the L-serine pocket. Arginine 261 to glutamate 263 contributes to the ATP binding site. Position 284 (glutamate 284) interacts with L-serine. Glutamate 348–serine 351 lines the ATP pocket. Position 383 (serine 383) interacts with L-serine.

The protein belongs to the class-II aminoacyl-tRNA synthetase family. Type-1 seryl-tRNA synthetase subfamily. As to quaternary structure, homodimer. The tRNA molecule binds across the dimer.

Its subcellular location is the cytoplasm. It carries out the reaction tRNA(Ser) + L-serine + ATP = L-seryl-tRNA(Ser) + AMP + diphosphate + H(+). It catalyses the reaction tRNA(Sec) + L-serine + ATP = L-seryl-tRNA(Sec) + AMP + diphosphate + H(+). The protein operates within aminoacyl-tRNA biosynthesis; selenocysteinyl-tRNA(Sec) biosynthesis; L-seryl-tRNA(Sec) from L-serine and tRNA(Sec): step 1/1. In terms of biological role, catalyzes the attachment of serine to tRNA(Ser). Is also able to aminoacylate tRNA(Sec) with serine, to form the misacylated tRNA L-seryl-tRNA(Sec), which will be further converted into selenocysteinyl-tRNA(Sec). This Ligilactobacillus salivarius (strain UCC118) (Lactobacillus salivarius) protein is Serine--tRNA ligase.